A 212-amino-acid polypeptide reads, in one-letter code: Ras-related protein Rab-21 (212 aa).

GTP is bound by residues Gly14–Thr21, Asp62–Gln66, and Asn120–Asp123. Positions Thr181–Asn212 are disordered. Positions Asp201–Asn212 are enriched in polar residues. 2 S-geranylgeranyl cysteine lipidation sites follow: Cys209 and Cys210.

This sequence belongs to the small GTPase superfamily. Rab family. As to quaternary structure, interacts with LIM domain proteins limF and ChLim.

It localises to the cell membrane. In terms of biological role, involved in the regulation of phagocytosis. The sequence is that of Ras-related protein Rab-21 (rab21) from Dictyostelium discoideum (Social amoeba).